The primary structure comprises 427 residues: MDKIIIRGGKRLSGAVPVSGAKNSALTLLPCALLTDEPVTLRNLPRLADIDGFQHLMNQFGVSTSIAGARPEDFGRVMTLQATRLTSTVAPYDLVRKMRASILVLGPMLARAGEATVSLPGGCAIGNRPIDLHLKALEALGAQIELAAGYVRAIAPDGGLPGGRYSFPVVSVGATENALMAAVLAKGKSTLHNAAREPEIVDLCNLLVAMGAQIEGIGTSDLTIHGVDRLHGATYMVMPDRIEAGSYACAAAITGGEVMLNGARIEDMEATVQALRDAGVHVEPRKGGIYVAADGPLKPVTISTAPYPGFATDMQAQLMAMLCLAHGSSVLTETIFENRYMHVPELNRMGARIETKGRTAVVHGVEKLTGAEVMATDLRASMSLVIAGLAAEGETQVHRLYHLDRGYERLEEKLSLLGAEIERVGGD.

Position 22-23 (22-23) interacts with phosphoenolpyruvate; the sequence is KN. Arg-99 contacts UDP-N-acetyl-alpha-D-glucosamine. Cys-123 (proton donor) is an active-site residue. A 2-(S-cysteinyl)pyruvic acid O-phosphothioketal modification is found at Cys-123. Residues 128–132, Asp-313, and Ile-335 contribute to the UDP-N-acetyl-alpha-D-glucosamine site; that span reads RPIDL.

Belongs to the EPSP synthase family. MurA subfamily.

The protein resides in the cytoplasm. The enzyme catalyses phosphoenolpyruvate + UDP-N-acetyl-alpha-D-glucosamine = UDP-N-acetyl-3-O-(1-carboxyvinyl)-alpha-D-glucosamine + phosphate. The protein operates within cell wall biogenesis; peptidoglycan biosynthesis. Cell wall formation. Adds enolpyruvyl to UDP-N-acetylglucosamine. This Novosphingobium aromaticivorans (strain ATCC 700278 / DSM 12444 / CCUG 56034 / CIP 105152 / NBRC 16084 / F199) protein is UDP-N-acetylglucosamine 1-carboxyvinyltransferase.